Here is a 468-residue protein sequence, read N- to C-terminus: ERO1-like protein alpha (468 aa).

Positions 1–23 are cleaved as a signal peptide; that stretch reads MGHRWGFLIVFLGAVGLLGSGYG. Intrachain disulfides connect cysteine 35–cysteine 48, cysteine 37–cysteine 46, cysteine 85–cysteine 391, cysteine 94–cysteine 99, cysteine 94–cysteine 131, cysteine 99–cysteine 104, cysteine 208–cysteine 241, and cysteine 394–cysteine 397. Serine 106, serine 143, and serine 145 each carry phosphoserine. FAD-binding residues include arginine 187, threonine 189, and tryptophan 200. Residues serine 252 and histidine 255 each coordinate FAD. The N-linked (GlcNAc...) asparagine glycan is linked to asparagine 280. FAD contacts are provided by arginine 287 and arginine 300. The N-linked (GlcNAc...) asparagine glycan is linked to asparagine 384.

The protein belongs to the EROs family. Predominantly monomer. May function both as a monomer and a homodimer. Interacts with PDILT. Interacts with ERP44; the interaction results in retention of ERO1A in the endoplasmic reticulum. It depends on FAD as a cofactor. The Cys-94/Cys-99 and Cys-394/Cys-397 disulfide bonds constitute the redox-active center. The Cys-94/Cys-99 disulfide bond may accept electron from P4HB and funnel them to the active site disulfide Cys-394/Cys-397. The regulatory Cys-99/Cys-104 disulfide bond stabilizes the other regulatory bond Cys-94/Cys-131. In terms of processing, phosphorylated on Ser-145 by FAM20C in the Golgi which increases its enzymatic activity. Phosphorylation is induced by lactation. It is also induced by hypoxia and reductive stress.

It is found in the endoplasmic reticulum membrane. The protein localises to the golgi apparatus lumen. Its subcellular location is the secreted. The protein resides in the cell projection. It localises to the dendrite. Enzyme activity is tightly regulated to prevent the accumulation of reactive oxygen species in the endoplasmic reticulum. Reversibly down-regulated by the formation of disulfide bonds between the active site Cys-94 and Cys-131, and between Cys-99 and Cys-104. Glutathione may be required to regulate its activity in the endoplasmic reticulum. Functionally, oxidoreductase involved in disulfide bond formation in the endoplasmic reticulum. Efficiently reoxidizes P4HB/PDI, the enzyme catalyzing protein disulfide formation, in order to allow P4HB to sustain additional rounds of disulfide formation. Following P4HB reoxidation, passes its electrons to molecular oxygen via FAD, leading to the production of reactive oxygen species (ROS) in the cell. Required for the proper folding of immunoglobulins. Plays an important role in ER stress-induced, CHOP-dependent apoptosis by activating the inositol 1,4,5-trisphosphate receptor IP3R1. This Sus scrofa (Pig) protein is ERO1-like protein alpha.